Reading from the N-terminus, the 192-residue chain is Fe/S biogenesis protein NfuA (192 aa).

[4Fe-4S] cluster contacts are provided by C149 and C152.

The protein belongs to the NfuA family. Homodimer. Requires [4Fe-4S] cluster as cofactor.

Functionally, involved in iron-sulfur cluster biogenesis. Binds a 4Fe-4S cluster, can transfer this cluster to apoproteins, and thereby intervenes in the maturation of Fe/S proteins. Could also act as a scaffold/chaperone for damaged Fe/S proteins. The sequence is that of Fe/S biogenesis protein NfuA from Shewanella sp. (strain MR-7).